The following is a 405-amino-acid chain: Arginine deiminase (405 aa).

Residue C395 is the Amidino-cysteine intermediate of the active site.

The protein belongs to the arginine deiminase family.

The protein localises to the cytoplasm. The catalysed reaction is L-arginine + H2O = L-citrulline + NH4(+). Its pathway is amino-acid degradation; L-arginine degradation via ADI pathway; carbamoyl phosphate from L-arginine: step 1/2. The protein is Arginine deiminase of Rhodococcus opacus (strain B4).